Reading from the N-terminus, the 861-residue chain is Bifunctional uridylyltransferase/uridylyl-removing enzyme (861 aa).

A uridylyltransferase region spans residues 1 to 321 (MKNDNRIIKN…VYHQKQKIIR (321 aa)). The segment at 322–678 (LDDEFQLSNR…IMPHHSQGGT (357 aa)) is uridylyl-removing. Residues 440–562 (VDQHTLFVIR…LPHAKYLDYL (123 aa)) enclose the HD domain. 2 ACT domains span residues 679-760 (EVFI…AVSR) and 788-861 (QLFL…KSKY).

Belongs to the GlnD family. It depends on Mg(2+) as a cofactor.

It carries out the reaction [protein-PII]-L-tyrosine + UTP = [protein-PII]-uridylyl-L-tyrosine + diphosphate. The catalysed reaction is [protein-PII]-uridylyl-L-tyrosine + H2O = [protein-PII]-L-tyrosine + UMP + H(+). Its activity is regulated as follows. Uridylyltransferase (UTase) activity is inhibited by glutamine, while glutamine activates uridylyl-removing (UR) activity. Its function is as follows. Modifies, by uridylylation and deuridylylation, the PII regulatory proteins (GlnB and homologs), in response to the nitrogen status of the cell that GlnD senses through the glutamine level. Under low glutamine levels, catalyzes the conversion of the PII proteins and UTP to PII-UMP and PPi, while under higher glutamine levels, GlnD hydrolyzes PII-UMP to PII and UMP (deuridylylation). Thus, controls uridylylation state and activity of the PII proteins, and plays an important role in the regulation of nitrogen assimilation and metabolism. The sequence is that of Bifunctional uridylyltransferase/uridylyl-removing enzyme from Legionella pneumophila (strain Lens).